We begin with the raw amino-acid sequence, 348 residues long: tRNA N6-adenosine threonylcarbamoyltransferase (348 aa).

Histidine 119 and histidine 123 together coordinate Fe cation. Substrate-binding positions include 141–145 (LVSGG), aspartate 174, glycine 187, aspartate 191, and asparagine 280. Residue aspartate 310 coordinates Fe cation.

Belongs to the KAE1 / TsaD family. The cofactor is Fe(2+).

The protein resides in the cytoplasm. The catalysed reaction is L-threonylcarbamoyladenylate + adenosine(37) in tRNA = N(6)-L-threonylcarbamoyladenosine(37) in tRNA + AMP + H(+). In terms of biological role, required for the formation of a threonylcarbamoyl group on adenosine at position 37 (t(6)A37) in tRNAs that read codons beginning with adenine. Is involved in the transfer of the threonylcarbamoyl moiety of threonylcarbamoyl-AMP (TC-AMP) to the N6 group of A37, together with TsaE and TsaB. TsaD likely plays a direct catalytic role in this reaction. The protein is tRNA N6-adenosine threonylcarbamoyltransferase of Enterococcus faecalis (strain ATCC 700802 / V583).